The sequence spans 69 residues: DNA-directed RNA polymerase subunit epsilon (69 aa).

This sequence belongs to the RNA polymerase subunit epsilon family. In terms of assembly, RNAP is composed of a core of 2 alpha, a beta and a beta' subunit. The core is associated with a delta subunit, and at least one of epsilon or omega. When a sigma factor is associated with the core the holoenzyme is formed, which can initiate transcription.

The enzyme catalyses RNA(n) + a ribonucleoside 5'-triphosphate = RNA(n+1) + diphosphate. Functionally, a non-essential component of RNA polymerase (RNAP). This Bacillus pumilus (strain SAFR-032) protein is DNA-directed RNA polymerase subunit epsilon.